The chain runs to 325 residues: Foldase protein PrsA (325 aa).

Positions 1–20 are cleaved as a signal peptide; the sequence is MKLMNKIIVPVTASALLLGA. C21 carries N-palmitoyl cysteine lipidation. A lipid anchor (S-diacylglycerol cysteine) is attached at C21. The PpiC domain maps to 139 to 245; that stretch reads ENSKKTSHIL…YGYHIIKADK (107 aa). 2 disordered regions span residues 159–200 and 303–325; these read EGLS…SAKK and PDKI…NSGS.

This sequence belongs to the PrsA family.

It is found in the cell membrane. The catalysed reaction is [protein]-peptidylproline (omega=180) = [protein]-peptidylproline (omega=0). Functionally, plays a major role in protein secretion by helping the post-translocational extracellular folding of several secreted proteins. This is Foldase protein PrsA from Staphylococcus epidermidis (strain ATCC 35984 / DSM 28319 / BCRC 17069 / CCUG 31568 / BM 3577 / RP62A).